Consider the following 446-residue polypeptide: MSDKRRYFGTDGVRGKVGQYPITPDFVLKLGWAAGRVLAKQGTKKVIIGKDTRISGYMLESALEAGLAAAGLKATFTGPMPTPAVAYLTQTFRAEAGIVISASHNPYYDNGIKFFSSEGTKLPDDIELAIEAELDKEIECVESAELGKATRLNDAAGRYIEFCKSTFPSELSLAKLKIVVDCANGATYHIAPNVFTELGADVIAMGVTPNGTNINHEVGATDVRALQQRVVEEQADLGLAFDGDGDRIIMVDHLGNKVDGDQIAYIIARDALRRGELKGGVVGTLMTNLGMENGLKQLGIPFVRAAVGDRYVMEKLLEKGWKIGAENSGHVILLDKVTTGDAIVAALQVLASVVGSELSLNELSKGMTLYPQVLENVRFAGQGNPLEAEAVKKTVEDVEADLGSKGRVLLRKSGTEPLIRVMVEGEDGELVQNSALKIAQAVKDNC.

Catalysis depends on serine 103, which acts as the Phosphoserine intermediate. Positions 103, 242, 244, and 246 each coordinate Mg(2+). Serine 103 bears the Phosphoserine mark.

It belongs to the phosphohexose mutase family. Mg(2+) is required as a cofactor. In terms of processing, activated by phosphorylation.

It carries out the reaction alpha-D-glucosamine 1-phosphate = D-glucosamine 6-phosphate. Functionally, catalyzes the conversion of glucosamine-6-phosphate to glucosamine-1-phosphate. This is Phosphoglucosamine mutase from Vibrio vulnificus (strain CMCP6).